The primary structure comprises 556 residues: GDP-Man:Man(3)GlcNAc(2)-PP-Dol alpha-1,2-mannosyltransferase (556 aa).

At 1–7 the chain is on the lumenal side; the sequence is MANGLFT. The helical transmembrane segment at 8-28 threads the bilayer; the sequence is YVAISLFTIGPLLALFIPFVW. The Cytoplasmic segment spans residues 29 to 184; sequence RLVGSSLGWY…RWVLASTWPY (156 aa). The span at 64 to 79 shows a compositional bias: basic and acidic residues; the sequence is SKSAKGRKAEKEDRDT. The segment at 64–86 is disordered; that stretch reads SKSAKGRKAEKEDRDTFNNTEAT. Residues 185-205 constitute an intramembrane region (helical); sequence FTLAGQSFGSLIMAWDAFSLL. Over 206 to 454 the chain is Cytoplasmic; it reads VPDIFVDTMG…VGVNGMWNEH (249 aa). The segment at residues 455–475 is an intramembrane region (helical); sequence FGIGVVEYQAAGLISVVHDSG. Residues 476 to 556 lie on the Cytoplasmic side of the membrane; it reads GPKLDIVVEV…KAVEKPKSRQ (81 aa).

It belongs to the glycosyltransferase group 1 family. Glycosyltransferase 4 subfamily.

It localises to the endoplasmic reticulum membrane. The enzyme catalyses an alpha-D-Man-(1-&gt;3)-[alpha-D-Man-(1-&gt;6)]-beta-D-Man-(1-&gt;4)-beta-D-GlcNAc-(1-&gt;4)-alpha-D-GlcNAc-diphospho-di-trans,poly-cis-dolichol + 2 GDP-alpha-D-mannose = an alpha-D-Man-(1-&gt;2)-alpha-D-Man-(1-&gt;2)-alpha-D-Man-(1-&gt;3)-[alpha-D-Man-(1-&gt;6)]-beta-D-Man-(1-&gt;4)-beta-D-GlcNAc-(1-&gt;4)-alpha-D-GlcNAc-diphospho-di-trans,poly-cis-dolichol + 2 GDP + 2 H(+). It functions in the pathway protein modification; protein glycosylation. Functionally, GDP-Man:Man(3)GlcNAc(2)-PP-Dol alpha-1,2-mannosyltransferase that operates in the biosynthetic pathway of dolichol-linked oligosaccharides, the glycan precursors employed in protein asparagine (N)-glycosylation. The assembly of dolichol-linked oligosaccharides begins on the cytosolic side of the endoplasmic reticulum membrane and finishes in its lumen. The sequential addition of sugars to dolichol pyrophosphate produces dolichol-linked oligosaccharides containing fourteen sugars, including two GlcNAcs, nine mannoses and three glucoses. Once assembled, the oligosaccharide is transferred from the lipid to nascent proteins by oligosaccharyltransferases. Catalyzes, on the cytoplasmic face of the endoplasmic reticulum, the addition of the fourth and fifth mannose residues to the dolichol-linked oligosaccharide chain, to produce Man(5)GlcNAc(2)-PP-dolichol core oligosaccharide. This is GDP-Man:Man(3)GlcNAc(2)-PP-Dol alpha-1,2-mannosyltransferase (alg-11) from Neurospora crassa (strain ATCC 24698 / 74-OR23-1A / CBS 708.71 / DSM 1257 / FGSC 987).